Here is a 91-residue protein sequence, read N- to C-terminus: Conotoxin VnMKLT1-021 (91 aa).

The signal sequence occupies residues 1-22; it reads MKLTCVMIVAVLFLTAWTFVTA. Positions 23 to 57 are excised as a propeptide; sequence DDPRDGPDTAVGWRKLFSEARDEMKNREASKLNER. 3 disulfides stabilise this stretch: C59–C78, C66–C82, and C77–C86.

Belongs to the conotoxin O1 superfamily. As to expression, expressed by the venom duct.

It is found in the secreted. This chain is Conotoxin VnMKLT1-021, found in Conus ventricosus (Mediterranean cone).